Here is a 222-residue protein sequence, read N- to C-terminus: PKHD-type hydroxylase PCC8801_2196 (222 aa).

In terms of domain architecture, Fe2OG dioxygenase spans 78-175; it reads RIHSLLFSRY…RLVVVGWIES (98 aa). 3 residues coordinate Fe cation: H96, D98, and H156. R166 lines the 2-oxoglutarate pocket.

Fe(2+) is required as a cofactor. The cofactor is L-ascorbate.

In Rippkaea orientalis (strain PCC 8801 / RF-1) (Cyanothece sp. (strain PCC 8801)), this protein is PKHD-type hydroxylase PCC8801_2196.